Consider the following 227-residue polypeptide: Cytochrome c oxidase subunit 2 (227 aa).

Residues 1–14 (MAHPVQLGLQDATS) lie on the Mitochondrial intermembrane side of the membrane. The helical transmembrane segment at 15-45 (PVMEELITFHDHALMAMSLISLLVLYALFST) threads the bilayer. At 46-59 (LTTKLTNTNITDAQ) the chain is on the mitochondrial matrix side. A helical membrane pass occupies residues 60–87 (EMEIIWTILPAIILVLIALPSLRILYLT). The Mitochondrial intermembrane segment spans residues 88–227 (DEVNNPSFTI…IFEMGPVFTL (140 aa)). Cu cation-binding residues include His161, Cys196, Glu198, Cys200, His204, and Met207. Glu198 provides a ligand contact to Mg(2+).

Belongs to the cytochrome c oxidase subunit 2 family. Component of the cytochrome c oxidase (complex IV, CIV), a multisubunit enzyme composed of 14 subunits. The complex is composed of a catalytic core of 3 subunits MT-CO1, MT-CO2 and MT-CO3, encoded in the mitochondrial DNA, and 11 supernumerary subunits COX4I, COX5A, COX5B, COX6A, COX6B, COX6C, COX7A, COX7B, COX7C, COX8 and NDUFA4, which are encoded in the nuclear genome. The complex exists as a monomer or a dimer and forms supercomplexes (SCs) in the inner mitochondrial membrane with NADH-ubiquinone oxidoreductase (complex I, CI) and ubiquinol-cytochrome c oxidoreductase (cytochrome b-c1 complex, complex III, CIII), resulting in different assemblies (supercomplex SCI(1)III(2)IV(1) and megacomplex MCI(2)III(2)IV(2)). Found in a complex with TMEM177, COA6, COX18, COX20, SCO1 and SCO2. Interacts with TMEM177 in a COX20-dependent manner. Interacts with COX20. Interacts with COX16. Requires Cu cation as cofactor.

It is found in the mitochondrion inner membrane. It carries out the reaction 4 Fe(II)-[cytochrome c] + O2 + 8 H(+)(in) = 4 Fe(III)-[cytochrome c] + 2 H2O + 4 H(+)(out). Component of the cytochrome c oxidase, the last enzyme in the mitochondrial electron transport chain which drives oxidative phosphorylation. The respiratory chain contains 3 multisubunit complexes succinate dehydrogenase (complex II, CII), ubiquinol-cytochrome c oxidoreductase (cytochrome b-c1 complex, complex III, CIII) and cytochrome c oxidase (complex IV, CIV), that cooperate to transfer electrons derived from NADH and succinate to molecular oxygen, creating an electrochemical gradient over the inner membrane that drives transmembrane transport and the ATP synthase. Cytochrome c oxidase is the component of the respiratory chain that catalyzes the reduction of oxygen to water. Electrons originating from reduced cytochrome c in the intermembrane space (IMS) are transferred via the dinuclear copper A center (CU(A)) of subunit 2 and heme A of subunit 1 to the active site in subunit 1, a binuclear center (BNC) formed by heme A3 and copper B (CU(B)). The BNC reduces molecular oxygen to 2 water molecules using 4 electrons from cytochrome c in the IMS and 4 protons from the mitochondrial matrix. This is Cytochrome c oxidase subunit 2 (MT-CO2) from Cercocebus galeritus (Tana river mangabey).